Consider the following 156-residue polypeptide: MKTFEGKLVSEKPIKIGIVCARFNEFIVSKLLGGALDALSRHNIKDDDITVAWVPGAFEIPLIASKMAKSKKYDAVVCLGAVIRGSTTHYDYVCAEVSKGIANVSLNSDIPVMFGVLTTENIEQAIERAGTKAGNKGFDSAMAAIEMVNLIREIEK.

5-amino-6-(D-ribitylamino)uracil-binding positions include Phe23, 57 to 59 (AFE), and 81 to 83 (AVI). 86-87 (ST) is a binding site for (2S)-2-hydroxy-3-oxobutyl phosphate. The active-site Proton donor is the His89. Position 114 (Phe114) interacts with 5-amino-6-(D-ribitylamino)uracil. Residue Arg128 coordinates (2S)-2-hydroxy-3-oxobutyl phosphate.

This sequence belongs to the DMRL synthase family.

The catalysed reaction is (2S)-2-hydroxy-3-oxobutyl phosphate + 5-amino-6-(D-ribitylamino)uracil = 6,7-dimethyl-8-(1-D-ribityl)lumazine + phosphate + 2 H2O + H(+). The protein operates within cofactor biosynthesis; riboflavin biosynthesis; riboflavin from 2-hydroxy-3-oxobutyl phosphate and 5-amino-6-(D-ribitylamino)uracil: step 1/2. Catalyzes the formation of 6,7-dimethyl-8-ribityllumazine by condensation of 5-amino-6-(D-ribitylamino)uracil with 3,4-dihydroxy-2-butanone 4-phosphate. This is the penultimate step in the biosynthesis of riboflavin. The protein is 6,7-dimethyl-8-ribityllumazine synthase of Brachyspira hyodysenteriae (strain ATCC 49526 / WA1).